A 158-amino-acid polypeptide reads, in one-letter code: Transcriptional repressor NrdR (158 aa).

The disordered stretch occupies residues 1 to 22; it reads MRCPYCGSEDTQVKDSRPAEDN. Residues 3-34 fold into a zinc finger; the sequence is CPYCGSEDTQVKDSRPAEDNTSIRRRRICPDC. A compositionally biased stretch (basic and acidic residues) spans 11–22; that stretch reads TQVKDSRPAEDN. One can recognise an ATP-cone domain in the interval 49-139; it reads LMVIKKTGRK…VYRDFSHAED (91 aa).

This sequence belongs to the NrdR family. The cofactor is Zn(2+).

Its function is as follows. Negatively regulates transcription of bacterial ribonucleotide reductase nrd genes and operons by binding to NrdR-boxes. The chain is Transcriptional repressor NrdR from Rhizobium rhizogenes (strain K84 / ATCC BAA-868) (Agrobacterium radiobacter).